The sequence spans 208 residues: Ras-related protein RABH1b (208 aa).

A GTP-binding site is contributed by 16–23 (GDQSVGKT). The short motif at 38–46 (YQATIGIDF) is the Effector region element. Residues 64–68 (DTAGQ), 122–125 (NKTD), and 152–153 (SA) contribute to the GTP site. 2 S-geranylgeranyl cysteine lipidation sites follow: Cys-206 and Cys-208. Cys-208 carries the cysteine methyl ester modification.

This sequence belongs to the small GTPase superfamily. Rab family. As to quaternary structure, interacts with the C-terminus of GC5, but not with GC3. Expressed in roots, stems, leaves and flowers.

The protein resides in the golgi apparatus membrane. It is found in the cytoplasm. Its subcellular location is the cytosol. In terms of biological role, protein transport. Regulator of membrane traffic from the Golgi apparatus towards the endoplasmic reticulum (ER). Binds GTP and GDP and possesses intrinsic GTPase activity. The sequence is that of Ras-related protein RABH1b (RABH1B) from Arabidopsis thaliana (Mouse-ear cress).